The sequence spans 27 residues: uncharacterized protein (27 aa).

It is found in the plastid. Its subcellular location is the chloroplast. This is an uncharacterized protein from Marchantia polymorpha (Common liverwort).